The chain runs to 294 residues: N-acetylmuramic acid 6-phosphate etherase (294 aa).

The SIS domain maps to 54–217 (VIKSFEEEGR…STASMIGVGK (164 aa)). The Proton donor role is filled by Glu-82. The active site involves Glu-113.

This sequence belongs to the GCKR-like family. MurNAc-6-P etherase subfamily. As to quaternary structure, homodimer.

It carries out the reaction N-acetyl-D-muramate 6-phosphate + H2O = N-acetyl-D-glucosamine 6-phosphate + (R)-lactate. Its pathway is amino-sugar metabolism; N-acetylmuramate degradation. Functionally, specifically catalyzes the cleavage of the D-lactyl ether substituent of MurNAc 6-phosphate, producing GlcNAc 6-phosphate and D-lactate. This chain is N-acetylmuramic acid 6-phosphate etherase, found in Bacillus cereus (strain B4264).